The sequence spans 138 residues: Small ribosomal subunit protein uS11c (138 aa).

The interval 1-21 (MTKAIQKIGSRRNGRIASRKN) is disordered. The span at 9 to 21 (GSRRNGRIASRKN) shows a compositional bias: basic residues.

It belongs to the universal ribosomal protein uS11 family. In terms of assembly, part of the 30S ribosomal subunit.

The protein resides in the plastid. The protein localises to the chloroplast. The polypeptide is Small ribosomal subunit protein uS11c (Ceratophyllum demersum (Rigid hornwort)).